Consider the following 321-residue polypeptide: Phosphoenolpyruvate transferase (321 aa).

Aspartate 51 contributes to the 7,8-didemethyl-8-hydroxy-5-deazariboflavin binding site.

This sequence belongs to the CofD family. As to quaternary structure, homodimer. Mg(2+) is required as a cofactor.

It catalyses the reaction enolpyruvoyl-2-diphospho-5'-guanosine + 7,8-didemethyl-8-hydroxy-5-deazariboflavin = dehydro coenzyme F420-0 + GMP + H(+). Its pathway is cofactor biosynthesis; coenzyme F420 biosynthesis. In terms of biological role, catalyzes the transfer of the phosphoenolpyruvate moiety from enoylpyruvoyl-2-diphospho-5'-guanosine (EPPG) to 7,8-didemethyl-8-hydroxy-5-deazariboflavin (FO) with the formation of dehydro coenzyme F420-0 and GMP. The sequence is that of Phosphoenolpyruvate transferase from Kitasatospora aureofaciens (Streptomyces aureofaciens).